Consider the following 277-residue polypeptide: Putative phosphoenolpyruvate synthase regulatory protein (277 aa).

157–164 (GVSRCGKT) contributes to the ADP binding site.

It belongs to the pyruvate, phosphate/water dikinase regulatory protein family. PSRP subfamily.

It carries out the reaction [pyruvate, water dikinase] + ADP = [pyruvate, water dikinase]-phosphate + AMP + H(+). The catalysed reaction is [pyruvate, water dikinase]-phosphate + phosphate + H(+) = [pyruvate, water dikinase] + diphosphate. In terms of biological role, bifunctional serine/threonine kinase and phosphorylase involved in the regulation of the phosphoenolpyruvate synthase (PEPS) by catalyzing its phosphorylation/dephosphorylation. The chain is Putative phosphoenolpyruvate synthase regulatory protein from Photobacterium profundum (strain SS9).